The sequence spans 873 residues: F-BAR domain only protein 1 (873 aa).

One can recognise an F-BAR domain in the interval 1 to 248; the sequence is MSYFGEHFWG…NVENVTVDML (248 aa). Residues 1-275 form a mediates membrane-binding region; it reads MSYFGEHFWG…LDFDAYSSAA (275 aa). A disordered region spans residues 153-172; the sequence is RENTSQKEMDKAETKSKKAA. Residues 155–178 adopt a coiled-coil conformation; the sequence is NTSQKEMDKAETKSKKAADSLRRS. Positions 267 to 439 are mediates interaction with the adaptor protein complex AP-2; the sequence is DFDAYSSAAL…KSLFGPPLES (173 aa). Residues S295, S343, and S368 each carry the phosphoserine modification. Positions 302–347 are disordered; it reads SVDFLESDSGVPPEVDDEGFTVRPDISQNNGAEPPRFSSSDSDFDD. Disordered stretches follow at residues 381–600 and 813–833; these read GSLI…RGPS and SGHL…SPVA. The span at 447-466 shows a compositional bias: low complexity; that stretch reads TGSSSLGFTSSPSPFSSSSP. At S518 the chain carries Phosphoserine. Residues 567 to 576 are compositionally biased toward low complexity; that stretch reads SLSPSPLGSS. A mediates interaction with AGFG1, CALM, DAB2, EPS15, EPS15R, ITSN1 and clathrin region spans residues 593-873; it reads HGISRGPSPV…FATGMYLVSC (281 aa). The residue at position 600 (S600) is a Phosphoserine. The 264-residue stretch at 609–872 folds into the MHD domain; the sequence is ALPVATAFTE…RFATGMYLVS (264 aa). The segment covering 816-827 has biased composition (polar residues); it reads LSASWQPQSGPS.

The protein belongs to the FCHO family. May oligomerize and form homotetramer. Interacts with AP2A2 and AP2B1; 2 subunits of the adaptor protein complex AP-2. Interacts with DAB2. Interacts with clathrin (CLTC or CLTCL1). Interacts with EPS15, EPS15R and ITSN1. Interacts with AGFG1 and CALM. May interact with ACVR1; linking this receptor to clathrin-mediated endocytosis. As to expression, mainly detected in brain and spleen.

It localises to the membrane. The protein resides in the clathrin-coated pit. In terms of biological role, functions in an early step of clathrin-mediated endocytosis. Has both a membrane binding/bending activity and the ability to recruit proteins essential to the formation of functional clathrin-coated pits. May regulate Bmp signaling by regulating clathrin-mediated endocytosis of Bmp receptors. Involved in the regulation of T-cell poliferation and activation. Affects TCR clustering upon receptor triggering and modulates its internalisation, playing a role in TCR-dependent T-cell activation. This is F-BAR domain only protein 1 from Mus musculus (Mouse).